The chain runs to 238 residues: MAQVSMRDMLNAGVHYGHQTRYWNPKMKPFIFGARNGVHVINLEKTLPLFNEALAELTRISSNNGKVLFVGTKRAASEAVKAAAVDCQQFYVNHRWLGGMLTNWKTVRQSIKRLKDLEAQTQDGTFDKITKKEALMRTRELEKLELSLGGIKDMAGLPDAIFVIGADHEHIAIKEANNLGIPVFAIVDTNSTPDGINYIIPGNDDATRAIQLYLDAASAAVKEGRGSNVEAELQIPAE.

Belongs to the universal ribosomal protein uS2 family.

This is Small ribosomal subunit protein uS2 from Haemophilus ducreyi (strain 35000HP / ATCC 700724).